A 137-amino-acid chain; its full sequence is Small ribosomal subunit protein uS19 (137 aa).

This sequence belongs to the universal ribosomal protein uS19 family.

Functionally, protein S19 forms a complex with S13 that binds strongly to the 16S ribosomal RNA. The chain is Small ribosomal subunit protein uS19 from Methanospirillum hungatei JF-1 (strain ATCC 27890 / DSM 864 / NBRC 100397 / JF-1).